Reading from the N-terminus, the 294-residue chain is Golgi to ER traffic protein 2 (294 aa).

The disordered stretch occupies residues 1-104 (MSSELSETEK…QATSPQETID (104 aa)). Over 1–166 (MSSELSETEK…LDYNNYLINN (166 aa)) the chain is Cytoplasmic. The segment covering 12 to 21 (KLIRERRQKK) has biased composition (basic residues). Residues 34–65 (ITGQAENSQLDTESPLDSKSSRETTPTVTKVD) show a composition bias toward polar residues. Positions 85–95 (KVEKSQKKKEQ) are enriched in basic and acidic residues. The chain crosses the membrane as a helical span at residues 167–187 (LKVWSIIFKWCFFLIPYLFAL). At 188–205 (TRSEPISFLPEQFSNPSN) the chain is on the lumenal side. Residues 206–225 (FFMIFLSFEIVATSIYFQKL) form a helical membrane-spanning segment. Residues 226–272 (QNIEKSNKINGFQSNNKIVNLVSLIPEGVLPVPDIKGKVIMALQYWD) are Cytoplasmic-facing. A helical membrane pass occupies residues 273-293 (VFSMFLTDICFVLVMMGLFKL). Residue I294 is a topological domain, lumenal.

Belongs to the GET2 family. In terms of assembly, component of the Golgi to ER traffic (GET) complex, which is composed of GET1, GET2 and GET3. Within the complex, GET1 and GET2 form a heterotetramer which is stabilized by phosphatidylinositol binding and which binds to the GET3 homodimer.

It is found in the endoplasmic reticulum membrane. It localises to the golgi apparatus membrane. In terms of biological role, required for the post-translational delivery of tail-anchored (TA) proteins to the endoplasmic reticulum. Together with GET1, acts as a membrane receptor for soluble GET3, which recognizes and selectively binds the transmembrane domain of TA proteins in the cytosol. The GET complex cooperates with the HDEL receptor ERD2 to mediate the ATP-dependent retrieval of resident ER proteins that contain a C-terminal H-D-E-L retention signal from the Golgi to the ER. This is Golgi to ER traffic protein 2 from Vanderwaltozyma polyspora (strain ATCC 22028 / DSM 70294 / BCRC 21397 / CBS 2163 / NBRC 10782 / NRRL Y-8283 / UCD 57-17) (Kluyveromyces polysporus).